A 467-amino-acid chain; its full sequence is Dihydrolipoyl dehydrogenase 3 (467 aa).

FAD is bound by residues 34-43, Lys-52, and Ala-116; that span reads EGRETLGGTC. Cysteines 43 and 48 form a disulfide. NAD(+)-binding positions include 182-186, Glu-205, Val-239, and 272-275; these read GAGVI and AIGR. Asp-314 and Ala-322 together coordinate FAD. His-446 (proton acceptor) is an active-site residue.

This sequence belongs to the class-I pyridine nucleotide-disulfide oxidoreductase family. As to quaternary structure, homodimer. Requires FAD as cofactor.

The protein localises to the cytoplasm. It catalyses the reaction N(6)-[(R)-dihydrolipoyl]-L-lysyl-[protein] + NAD(+) = N(6)-[(R)-lipoyl]-L-lysyl-[protein] + NADH + H(+). In terms of biological role, LPD-3 may substitute for lipoamide dehydrogenase of the 2-oxoglutarate dehydrogenase and pyruvate multienzyme complexes when the latter is inactive or missing. The polypeptide is Dihydrolipoyl dehydrogenase 3 (lpd3) (Pseudomonas aeruginosa (strain ATCC 15692 / DSM 22644 / CIP 104116 / JCM 14847 / LMG 12228 / 1C / PRS 101 / PAO1)).